The following is a 228-amino-acid chain: MSEPTLRLSGIEKTYLSGTPGEVRVLRGVDLSVEPGEMVALVAPSGAGKSTLLHISGLLDVPDAGRVEIAGQDMTGRGDRARTGVRRRDVGFVYQFHHLLPEFTALENVVLPQLANGIGEGEARARARALLSRVGVEGRAGHRPAALSGGEQQRVAFCRALANAPRLLLADEPTGNLDPATSDQVFDALVELVRGTGLSALIATHNLELAARMDRVVRLSDGRLSAES.

An ABC transporter domain is found at leucine 6–serine 228. Alanine 43–serine 50 is a binding site for ATP.

It belongs to the ABC transporter superfamily. Lipoprotein translocase (TC 3.A.1.125) family. The complex is composed of two ATP-binding proteins (LolD) and two transmembrane proteins (LolC and LolE).

Its subcellular location is the cell inner membrane. Part of the ABC transporter complex LolCDE involved in the translocation of mature outer membrane-directed lipoproteins, from the inner membrane to the periplasmic chaperone, LolA. Responsible for the formation of the LolA-lipoprotein complex in an ATP-dependent manner. The polypeptide is Lipoprotein-releasing system ATP-binding protein LolD (Ruegeria pomeroyi (strain ATCC 700808 / DSM 15171 / DSS-3) (Silicibacter pomeroyi)).